Here is a 357-residue protein sequence, read N- to C-terminus: Large ribosomal subunit protein uL10 (357 aa).

Residues 311–357 form a disordered region; sequence MVSRSAEAAERKEKEEEEEEEAEEEEAEEEEEEEEEEAAAGLGALFG. The segment covering 325–348 has biased composition (acidic residues); it reads EEEEEEEAEEEEAEEEEEEEEEEA.

This sequence belongs to the universal ribosomal protein uL10 family. In terms of assembly, part of the 50S ribosomal subunit. Forms part of the ribosomal stalk which helps the ribosome interact with GTP-bound translation factors. Forms a heptameric L10(L12)2(L12)2(L12)2 complex, where L10 forms an elongated spine to which the L12 dimers bind in a sequential fashion.

Functionally, forms part of the ribosomal stalk, playing a central role in the interaction of the ribosome with GTP-bound translation factors. The chain is Large ribosomal subunit protein uL10 from Methanopyrus kandleri (strain AV19 / DSM 6324 / JCM 9639 / NBRC 100938).